We begin with the raw amino-acid sequence, 407 residues long: Argininosuccinate synthase (407 aa).

Residue 8-16 participates in ATP binding; that stretch reads AYSGGLDTT. L-citrulline is bound by residues tyrosine 86 and serine 91. Glycine 116 is an ATP binding site. The L-aspartate site is built by threonine 118, asparagine 122, and aspartate 123. Residue asparagine 122 coordinates L-citrulline. Positions 126, 178, 187, 264, and 276 each coordinate L-citrulline.

This sequence belongs to the argininosuccinate synthase family. Type 1 subfamily. As to quaternary structure, homotetramer.

The protein localises to the cytoplasm. It carries out the reaction L-citrulline + L-aspartate + ATP = 2-(N(omega)-L-arginino)succinate + AMP + diphosphate + H(+). It participates in amino-acid biosynthesis; L-arginine biosynthesis; L-arginine from L-ornithine and carbamoyl phosphate: step 2/3. The sequence is that of Argininosuccinate synthase from Lachnoclostridium phytofermentans (strain ATCC 700394 / DSM 18823 / ISDg) (Clostridium phytofermentans).